A 168-amino-acid chain; its full sequence is NADH-quinone oxidoreductase subunit B (168 aa).

The [4Fe-4S] cluster site is built by C49, C50, C114, and C144.

The protein belongs to the complex I 20 kDa subunit family. NDH-1 is composed of 14 different subunits. Subunits NuoB, C, D, E, F, and G constitute the peripheral sector of the complex. [4Fe-4S] cluster serves as cofactor.

The protein localises to the cell membrane. It catalyses the reaction a quinone + NADH + 5 H(+)(in) = a quinol + NAD(+) + 4 H(+)(out). Its function is as follows. NDH-1 shuttles electrons from NADH, via FMN and iron-sulfur (Fe-S) centers, to quinones in the respiratory chain. Couples the redox reaction to proton translocation (for every two electrons transferred, four hydrogen ions are translocated across the cytoplasmic membrane), and thus conserves the redox energy in a proton gradient. In Wolbachia pipientis wMel, this protein is NADH-quinone oxidoreductase subunit B.